A 373-amino-acid chain; its full sequence is SWI/SNF-related matrix-associated actin-dependent regulator of chromatin subfamily B member 1 (373 aa).

The interval 1 to 101 is DNA-binding; the sequence is MALSKAFGQK…DEKYKAVSIS (101 aa).

It belongs to the SNF5 family. As to quaternary structure, component of the multiprotein chromatin-remodeling complexes SWI/SNF. Component of neural progenitors-specific chromatin remodeling complex (npBAF complex) and the neuron-specific chromatin remodeling complex (nBAF complex). Component of the BAF (SWI/SNF) chromatin remodeling complex. Component of the SWI/SNF-B (PBAF) chromatin remodeling complex. Binds to double-stranded DNA.

The protein resides in the nucleus. In terms of biological role, involved in chromatin-remodeling. Core component of the BAF (SWI/SNF) complex. This ATP-dependent chromatin-remodeling complex plays important roles in cell proliferation and differentiation, in cellular antiviral activities and inhibition of tumor formation. Belongs to the neural progenitors-specific chromatin remodeling complex (npBAF complex) and the neuron-specific chromatin remodeling complex (nBAF complex) and may play a role in neural development. In Dichotomyctere fluviatilis (Green pufferfish), this protein is SWI/SNF-related matrix-associated actin-dependent regulator of chromatin subfamily B member 1 (smarcb1).